The primary structure comprises 426 residues: Adenylosuccinate synthetase (426 aa).

Residues 12–18 and 40–42 contribute to the GTP site; these read GDEGKGK and GHT. The active-site Proton acceptor is Asp13. Mg(2+) is bound by residues Asp13 and Gly40. IMP-binding positions include 13-16, 38-41, Thr131, Arg145, Gln226, Thr241, and Arg305; these read DEGK and NAGH. His41 functions as the Proton donor in the catalytic mechanism. 301 to 307 lines the substrate pocket; sequence ATTGRKR. GTP is bound by residues Arg307, 333 to 335, and 415 to 417; these read KLD and SVG.

Belongs to the adenylosuccinate synthetase family. Homodimer. Mg(2+) is required as a cofactor.

Its subcellular location is the cytoplasm. It catalyses the reaction IMP + L-aspartate + GTP = N(6)-(1,2-dicarboxyethyl)-AMP + GDP + phosphate + 2 H(+). The protein operates within purine metabolism; AMP biosynthesis via de novo pathway; AMP from IMP: step 1/2. Its function is as follows. Plays an important role in the de novo pathway of purine nucleotide biosynthesis. Catalyzes the first committed step in the biosynthesis of AMP from IMP. This Nitratidesulfovibrio vulgaris (strain DP4) (Desulfovibrio vulgaris) protein is Adenylosuccinate synthetase.